Reading from the N-terminus, the 102-residue chain is MNPLKDLRASLPRLAFMAACTLLSATLPDLAQAGGGLQRVNHFMASIVVVLRGASVATVTIAIIWAGYKLLFRHADVLDVVRVVLAGLLIGASAEIARYLLT.

A signal peptide spans 1–33; that stretch reads MNPLKDLRASLPRLAFMAACTLLSATLPDLAQA. Transmembrane regions (helical) follow at residues 47–67 and 77–97; these read IVVV…IWAG and VLDV…AEIA.

This sequence belongs to the PtlA family.

The protein localises to the cell membrane. The sequence is that of Type IV secretion system protein PtlA homolog (ptlA) from Bordetella parapertussis (strain 12822 / ATCC BAA-587 / NCTC 13253).